A 161-amino-acid polypeptide reads, in one-letter code: SsrA-binding protein (161 aa).

The segment at 138-161 (DKRTDSKEKDWNRDKARIMKSSLR) is disordered. Over residues 139–154 (KRTDSKEKDWNRDKAR) the composition is skewed to basic and acidic residues.

Belongs to the SmpB family.

The protein resides in the cytoplasm. In terms of biological role, required for rescue of stalled ribosomes mediated by trans-translation. Binds to transfer-messenger RNA (tmRNA), required for stable association of tmRNA with ribosomes. tmRNA and SmpB together mimic tRNA shape, replacing the anticodon stem-loop with SmpB. tmRNA is encoded by the ssrA gene; the 2 termini fold to resemble tRNA(Ala) and it encodes a 'tag peptide', a short internal open reading frame. During trans-translation Ala-aminoacylated tmRNA acts like a tRNA, entering the A-site of stalled ribosomes, displacing the stalled mRNA. The ribosome then switches to translate the ORF on the tmRNA; the nascent peptide is terminated with the 'tag peptide' encoded by the tmRNA and targeted for degradation. The ribosome is freed to recommence translation, which seems to be the essential function of trans-translation. The polypeptide is SsrA-binding protein (Aliivibrio fischeri (strain ATCC 700601 / ES114) (Vibrio fischeri)).